The primary structure comprises 342 residues: N-acetyl-gamma-glutamyl-phosphate reductase (342 aa).

Cys-147 is a catalytic residue.

It belongs to the NAGSA dehydrogenase family. Type 1 subfamily.

The protein resides in the cytoplasm. It catalyses the reaction N-acetyl-L-glutamate 5-semialdehyde + phosphate + NADP(+) = N-acetyl-L-glutamyl 5-phosphate + NADPH + H(+). It functions in the pathway amino-acid biosynthesis; L-arginine biosynthesis; N(2)-acetyl-L-ornithine from L-glutamate: step 3/4. Functionally, catalyzes the NADPH-dependent reduction of N-acetyl-5-glutamyl phosphate to yield N-acetyl-L-glutamate 5-semialdehyde. The protein is N-acetyl-gamma-glutamyl-phosphate reductase of Campylobacter jejuni subsp. doylei (strain ATCC BAA-1458 / RM4099 / 269.97).